The sequence spans 296 residues: 4-hydroxy-tetrahydrodipicolinate synthase (296 aa).

Residue Thr49 participates in pyruvate binding. The active-site Proton donor/acceptor is Tyr137. The Schiff-base intermediate with substrate role is filled by Lys165. Position 207 (Val207) interacts with pyruvate.

This sequence belongs to the DapA family. Homotetramer; dimer of dimers.

The protein resides in the cytoplasm. The catalysed reaction is L-aspartate 4-semialdehyde + pyruvate = (2S,4S)-4-hydroxy-2,3,4,5-tetrahydrodipicolinate + H2O + H(+). The protein operates within amino-acid biosynthesis; L-lysine biosynthesis via DAP pathway; (S)-tetrahydrodipicolinate from L-aspartate: step 3/4. In terms of biological role, catalyzes the condensation of (S)-aspartate-beta-semialdehyde [(S)-ASA] and pyruvate to 4-hydroxy-tetrahydrodipicolinate (HTPA). This chain is 4-hydroxy-tetrahydrodipicolinate synthase, found in Nitrobacter hamburgensis (strain DSM 10229 / NCIMB 13809 / X14).